The sequence spans 986 residues: LRR receptor-like serine/threonine-protein kinase ER2 (986 aa).

The first 21 residues, 1-21 (MTTTTTTRLLLAAILLAVAAA), serve as a signal peptide directing secretion. The Extracellular portion of the chain corresponds to 22 to 581 (DDDGQTLLEI…VQRSSVSRSA (560 aa)). N-linked (GlcNAc...) asparagine glycosylation is found at Asn-64 and Asn-73. LRR repeat units follow at residues 68–89 (AVAALNLSGLNLGGEISPAIGN), 90–114 (LKSVESIDLKSNELSGQIPDEIGDC), 116–138 (SLKTLDLSSNNLGGDIPFSISKL), 139–161 (KHLENLILKNNQLVGMIPSTLSQ), 162–186 (LPNLKILDLAQNKLNGEIPRLIYWN), 188–210 (VLQYLGLRSNNLEGSLSPEMCQL), 211–233 (TGLWYFDVKNNSLTGIIPDTIGN), 234–259 (CTSFQVLDLSYNRLTGEIPFNIGFLQ), 261–280 (ATLSLQGNNFSGPIPSVIGL), 281–304 (MQALAVLDLSFNQLSGPIPSILGN), 306–329 (TYTEKLYLQGNRLTGSIPPELGNM), 330–352 (STLHYLELNDNQLTGFIPPELGK), 354–377 (TGLFDLNLANNNLEGPIPDNISSC), 379–401 (NLISFNAYGNKLNGTVPRSLHKL), 402–425 (ESITYLNLSSNYLSGAIPIELAKM), 427–449 (NLDTLDLSCNMVAGPIPSAIGSL), 450–472 (EHLLRLNFSNNNLVGYIPAEFGN), 473–498 (LRSIMEIDLSSNHLGGLIPQEVGMLQ), 500–520 (LILLKLESNNITGDVSSLINC), and 521–545 (FSLNVLNVSYNNLAGIVPTDNNFSR). 2 N-linked (GlcNAc...) asparagine glycosylation sites follow: Asn-220 and Asn-233. N-linked (GlcNAc...) asparagine glycosylation is found at Asn-269, Asn-304, and Asn-328. N-linked (GlcNAc...) asparagine glycans are attached at residues Asn-373, Asn-391, and Asn-408. Asn-456 is a glycosylation site (N-linked (GlcNAc...) asparagine). Asn-509, Asn-527, and Asn-542 each carry an N-linked (GlcNAc...) asparagine glycan. The chain crosses the membrane as a helical span at residues 582–602 (ILGIAVAGLVILLMILAAACW). Residues 603–986 (PHWAQVPKDV…FGEVISQNTE (384 aa)) lie on the Cytoplasmic side of the membrane. Positions 653–934 (LSEKYIIGYG…YPDPPSKPAL (282 aa)) constitute a Protein kinase domain. Residues 659-667 (IGYGASSTV) and Lys-681 contribute to the ATP site. The active-site Proton acceptor is Asp-779.

The protein belongs to the protein kinase superfamily. Ser/Thr protein kinase family.

It localises to the cell membrane. It catalyses the reaction L-seryl-[protein] + ATP = O-phospho-L-seryl-[protein] + ADP + H(+). The catalysed reaction is L-threonyl-[protein] + ATP = O-phospho-L-threonyl-[protein] + ADP + H(+). Its function is as follows. Receptor kinase that may be involved in the regulation of cell proliferation and cell growth. This is LRR receptor-like serine/threonine-protein kinase ER2 from Oryza sativa subsp. japonica (Rice).